The following is a 51-amino-acid chain: Large ribosomal subunit protein eL39 (51 aa).

The protein belongs to the eukaryotic ribosomal protein eL39 family.

This chain is Large ribosomal subunit protein eL39, found in Methanobrevibacter smithii (strain ATCC 35061 / DSM 861 / OCM 144 / PS).